The chain runs to 315 residues: L-lactate dehydrogenase (315 aa).

NAD(+) is bound by residues Val-17, Asp-38, Lys-43, Tyr-69, and 83–84; that span reads GA. Residues Gln-86 and Arg-92 each coordinate substrate. Residues Ser-105, 122-124, and Ser-147 each bind NAD(+); that span reads ATN. Substrate is bound at residue 124 to 127; it reads NPVD. Residue 152–155 coordinates substrate; it reads DTAR. Beta-D-fructose 1,6-bisphosphate-binding residues include Arg-157 and His-172. The Proton acceptor role is filled by His-179. Tyr-223 is subject to Phosphotyrosine. Residue Thr-232 coordinates substrate.

The protein belongs to the LDH/MDH superfamily. LDH family. As to quaternary structure, homotetramer.

The protein localises to the cytoplasm. The catalysed reaction is (S)-lactate + NAD(+) = pyruvate + NADH + H(+). It participates in fermentation; pyruvate fermentation to lactate; (S)-lactate from pyruvate: step 1/1. Its activity is regulated as follows. Allosterically activated by fructose 1,6-bisphosphate (FBP). In terms of biological role, catalyzes the conversion of lactate to pyruvate. The protein is L-lactate dehydrogenase of Macrococcus caseolyticus (strain JCSC5402) (Macrococcoides caseolyticum).